Reading from the N-terminus, the 1105-residue chain is Ran-binding protein 6 (1105 aa).

The residue at position 2 (A2) is an N-acetylalanine. HEAT repeat units lie at residues 219–257 (FKDF…TVPK), 361–399 (KVVL…GCHQ), 402–440 (EPIL…DFAP), 444–483 (KKFH…DCPK), 866–905 (LPWF…HCSP), 908–946 (FKYV…FGGD), and 949–987 (RSLC…IGKI).

The protein belongs to the importin beta family.

The protein resides in the cytoplasm. It is found in the nucleus. In terms of biological role, may function in nuclear protein import as nuclear transport receptor. The sequence is that of Ran-binding protein 6 (Ranbp6) from Mus musculus (Mouse).